A 277-amino-acid polypeptide reads, in one-letter code: Large ribosomal subunit protein uL2 (277 aa).

The disordered stretch occupies residues 222–277 (GVAMNPVDHPHGGGEGRTSGGRHPVTPWGKPTKGKKTRSNKATDKFIMRSRHQRKK).

It belongs to the universal ribosomal protein uL2 family. Part of the 50S ribosomal subunit. Forms a bridge to the 30S subunit in the 70S ribosome.

Functionally, one of the primary rRNA binding proteins. Required for association of the 30S and 50S subunits to form the 70S ribosome, for tRNA binding and peptide bond formation. It has been suggested to have peptidyltransferase activity; this is somewhat controversial. Makes several contacts with the 16S rRNA in the 70S ribosome. The chain is Large ribosomal subunit protein uL2 from Brucella canis (strain ATCC 23365 / NCTC 10854 / RM-666).